Consider the following 488-residue polypeptide: Glutamate--tRNA ligase (488 aa).

Positions 9 to 19 match the 'HIGH' region motif; sequence PSPTGFLHIGG. Zn(2+) is bound by residues C112, C114, C139, and H141. A 'KMSKS' region motif is present at residues 256-260; sequence KLSKR. K259 provides a ligand contact to ATP.

It belongs to the class-I aminoacyl-tRNA synthetase family. Glutamate--tRNA ligase type 1 subfamily. In terms of assembly, monomer. Zn(2+) is required as a cofactor.

The protein resides in the cytoplasm. The catalysed reaction is tRNA(Glu) + L-glutamate + ATP = L-glutamyl-tRNA(Glu) + AMP + diphosphate. Its function is as follows. Catalyzes the attachment of glutamate to tRNA(Glu) in a two-step reaction: glutamate is first activated by ATP to form Glu-AMP and then transferred to the acceptor end of tRNA(Glu). This is Glutamate--tRNA ligase from Elusimicrobium minutum (strain Pei191).